The primary structure comprises 307 residues: MAFQQTLKNKVAFSGIGLHSGKEITLTLRPADAGNGIVFHRIDTTPPVSIEARTENVVSTRLSTTIGKNGAAVSTIEHLMAALFSCGIDNAHVDINGPEVPIMDGSAAPFVEGIRNAGSKSLSKSRKYLVVKKPVTIRDGDKRITVLPSRYYRISFDMHFNHPVINRQFRTMKFDRESFADDFSPARTFGFLAEIEALMAHGLALGASLENAVGIDDNGIVNPEGLRFTDEFVRHKILDSIGDFALAGVHLVGHVKACKSGHELNHKFITELLSRSDCWSLMELTPPENKTASFPISLPEMAWLEAC.

Zn(2+)-binding residues include H78, H235, and D239. The active-site Proton donor is H262.

Belongs to the LpxC family. The cofactor is Zn(2+).

It catalyses the reaction a UDP-3-O-[(3R)-3-hydroxyacyl]-N-acetyl-alpha-D-glucosamine + H2O = a UDP-3-O-[(3R)-3-hydroxyacyl]-alpha-D-glucosamine + acetate. It functions in the pathway glycolipid biosynthesis; lipid IV(A) biosynthesis; lipid IV(A) from (3R)-3-hydroxytetradecanoyl-[acyl-carrier-protein] and UDP-N-acetyl-alpha-D-glucosamine: step 2/6. In terms of biological role, catalyzes the hydrolysis of UDP-3-O-myristoyl-N-acetylglucosamine to form UDP-3-O-myristoylglucosamine and acetate, the committed step in lipid A biosynthesis. The protein is UDP-3-O-acyl-N-acetylglucosamine deacetylase of Geotalea uraniireducens (strain Rf4) (Geobacter uraniireducens).